We begin with the raw amino-acid sequence, 164 residues long: Cytochrome c-type biogenesis protein CcmE (164 aa).

The Cytoplasmic portion of the chain corresponds to 1 to 8 (MNPRRKQR). A helical; Signal-anchor for type II membrane protein transmembrane segment spans residues 9–29 (LAVVGIIGFLIVSAVGLMLYA). At 30–164 (LNDSIDLFYT…YESSNGAGSK (135 aa)) the chain is on the periplasmic side. His-128 and Tyr-132 together coordinate heme. Positions 142 to 164 (KGIKHVKPENMPTYESSNGAGSK) are disordered. The segment covering 154–164 (TYESSNGAGSK) has biased composition (polar residues).

Belongs to the CcmE/CycJ family.

Its subcellular location is the cell inner membrane. Heme chaperone required for the biogenesis of c-type cytochromes. Transiently binds heme delivered by CcmC and transfers the heme to apo-cytochromes in a process facilitated by CcmF and CcmH. This chain is Cytochrome c-type biogenesis protein CcmE, found in Alteromonas mediterranea (strain DSM 17117 / CIP 110805 / LMG 28347 / Deep ecotype).